A 969-amino-acid chain; its full sequence is Glycine dehydrogenase (decarboxylating) (969 aa).

N6-(pyridoxal phosphate)lysine is present on lysine 716.

The protein belongs to the GcvP family. As to quaternary structure, the glycine cleavage system is composed of four proteins: P, T, L and H. The cofactor is pyridoxal 5'-phosphate.

The enzyme catalyses N(6)-[(R)-lipoyl]-L-lysyl-[glycine-cleavage complex H protein] + glycine + H(+) = N(6)-[(R)-S(8)-aminomethyldihydrolipoyl]-L-lysyl-[glycine-cleavage complex H protein] + CO2. In terms of biological role, the glycine cleavage system catalyzes the degradation of glycine. The P protein binds the alpha-amino group of glycine through its pyridoxal phosphate cofactor; CO(2) is released and the remaining methylamine moiety is then transferred to the lipoamide cofactor of the H protein. This is Glycine dehydrogenase (decarboxylating) from Shewanella woodyi (strain ATCC 51908 / MS32).